Reading from the N-terminus, the 468-residue chain is UDP-N-acetylmuramate--L-alanine ligase (468 aa).

ATP is bound at residue 114-120; it reads GTHGKTT.

It belongs to the MurCDEF family.

It localises to the cytoplasm. The catalysed reaction is UDP-N-acetyl-alpha-D-muramate + L-alanine + ATP = UDP-N-acetyl-alpha-D-muramoyl-L-alanine + ADP + phosphate + H(+). It participates in cell wall biogenesis; peptidoglycan biosynthesis. Cell wall formation. The polypeptide is UDP-N-acetylmuramate--L-alanine ligase (Rhodopseudomonas palustris (strain HaA2)).